Here is a 1638-residue protein sequence, read N- to C-terminus: MENLFEKLMEQIKMPPNLRRSSQFEHADIENVEVHTASKLWHFQLIFDEILPIDTYKLLTELTETAFSTIARTEISVSSRNQNIDEQNLNDYYQYALTLPELCDSAFSSIFKKYHLEKEEEKIHLMVEDNPQMDFFVEKYFPILEEKFKSFGFGEVRITPLVDQELTETQAAAHAEKVAARLAAQTAEQAQISEIKKQRSEERESKNTREAKPEFVETALSDGIFFGRKISGQSPITSMSFIAGEGFGVIFEGLVFEAAHREFTGKESGKVNHILELKMADETSTFMISKWGRKDEEIAQFDQIVSTVKAMNEKIIADRTDGEDNFTDSLSDALWLRVQGNIEHDKYKDDLVLTANAVVEIKPKPTIDRVALQIKAVKSDKIQLGREIKNNEPVTPMRSVSEFSTNGPVVFEGYVFKGELREIKSRKTGNISYLLEFEMTDYTSSFYVQKWLRGEEEIQLAKQIKAGLWCRVRGNVQRDNFKNDLVLQLTDLIEIPTQNVREDKSDEKRVEFHAHTNMSQMDAIPSASSLVAQAAKWGHKAIAITDHGGLQSFPEAHSAGKKNGVKIIYGVEANLVEDKIPIVYNETDVDMYESTYVVFDVETTGLSAVHNDLIQIAATKMHKGNPIDEFDEFINPGYRLSEFTTELTGITDDHVKNAKPLYEVLTKFQKFCEGTILVAHNATFDVGFMNMNYSRNGLPIITQPVVDTLEFARNLYPEMKRFGLGQLTKKFQIGLEHHHMANFDAEATGRLLFVFLEELRTRNTGWTSLLELNDKLVSEDSYKKVRPKHVTLYAKTQEGLKNLFKIVSFGNVKYYAGLPRVPRSVLEANREGLLVGSACEIGEVFDAAINKTFEETLEIAKFYDFIEVFPPALYRSLVVGGSFKSEKELEQTLKDLIKIGKTLGKPVLATGNLHYLNPEDAIYREIIVRSLGLGAEINWTQGHGEHAKPLPLPEAHFRTTDEMLEAFSFLDEKTAREIVIDNTQKMADEFDVLTPVRDDLYTPKMVFDGGETSEERIVRLTYEKAHEWYGNPLPDIIDARLEKELRSILGNGFSVVYIISQELVKRSNDRGYIVGSRGSVGSSLVATMIGITEVNPLAPHYRCPECQYFECYDDGSFGSGYDMPDKNCPKCDHKLIKDGHDIPFETFLGFKGDKVPDIDLNFSGDDQPLAHLDVRDIFGEDYAFRAGTIGTVAEKTAFGFVKGYERDYDQFYGNAEIDRLAAGSTGVKRTTGQHPGGIIVIPNYMDVYDFSPVQFPADDVNAEWQTTHFDFHAIHDNILKLDILGHDDPTMIRKLQSLSGIVPQDIPMDDPGVMKLFTGTESLGLTEEQLGVKLGTLGIPEMGTFTSMNMIAEAKPKNFADLLQISGLSHGTDVWSGNAQDLIRSGIADLSSVIGCRDDIMVYLIHKGLENGLAFTIMERVRKGMWNKIPAEEREKYVEAMREHDVPEWYIESCSKIKYMFPKAHAAAYIMMALRVAYFKVHHPILYYCAWFSIRATAFDIGVMGAGLEAVKAKMKEIKDKGFDATNVETNLYTTLELCNEMLERGFTFGKIDLYRSEATEFVIDGDTLIPPFVTMDGLGENVAKQIVAARAEGEFLSKMELRKRGGVSQTIIENMTNMGVLEGMPDDNQLSLFDDFF.

The disordered stretch occupies residues 193–212 (SEIKKQRSEERESKNTREAK). Positions 194–212 (EIKKQRSEERESKNTREAK) are enriched in basic and acidic residues. One can recognise an Exonuclease domain in the interval 596–752 (YVVFDVETTG…FDAEATGRLL (157 aa)).

Belongs to the DNA polymerase type-C family. PolC subfamily.

It is found in the cytoplasm. It carries out the reaction DNA(n) + a 2'-deoxyribonucleoside 5'-triphosphate = DNA(n+1) + diphosphate. Required for replicative DNA synthesis. This DNA polymerase also exhibits 3' to 5' exonuclease activity. In Lactococcus lactis subsp. lactis (strain IL1403) (Streptococcus lactis), this protein is DNA polymerase III PolC-type.